The sequence spans 247 residues: Adenosine 5'-phosphosulfate reductase (247 aa).

[4Fe-4S] cluster is bound by residues Cys133, Cys134, Cys216, and Cys219. The interval 222–247 (KPAPGSDPRSGRWAGQAKTECGLHAS) is disordered. Catalysis depends on Cys242, which acts as the Nucleophile; cysteine thiosulfonate intermediate.

The protein belongs to the PAPS reductase family. CysH subfamily. The cofactor is [4Fe-4S] cluster.

The protein localises to the cytoplasm. It carries out the reaction [thioredoxin]-disulfide + sulfite + AMP + 2 H(+) = adenosine 5'-phosphosulfate + [thioredoxin]-dithiol. It functions in the pathway sulfur metabolism; hydrogen sulfide biosynthesis; sulfite from sulfate. Catalyzes the formation of sulfite from adenosine 5'-phosphosulfate (APS) using thioredoxin as an electron donor. The polypeptide is Adenosine 5'-phosphosulfate reductase (Rhodococcus opacus (strain B4)).